We begin with the raw amino-acid sequence, 240 residues long: Lysoplasmalogenase TMEM86A (240 aa).

Over 1–21 the chain is Cytoplasmic; that stretch reads MVSPVTVVKSEGPKLVPFFKA. Residues 22 to 42 traverse the membrane as a helical segment; sequence TCVYFVLWLPSSSPSWVSTLI. Position 43 (K43) is a topological domain, extracellular. The chain crosses the membrane as a helical span at residues 44–64; sequence CLPIFCLWLFLLAHGLGFLLA. At 65-70 the chain is on the cytoplasmic side; that stretch reads HPSATR. A helical transmembrane segment spans residues 71–91; the sequence is IFVGLVFSAVGDAFLIWQDQG. A topological domain (extracellular) is located at residue Y92. The helical transmembrane segment at 93-113 threads the bilayer; the sequence is FVHGLLMFAVTHMFYASAFGM. The Cytoplasmic portion of the chain corresponds to 114–115; that stretch reads QP. Residues 116 to 136 traverse the membrane as a helical segment; the sequence is LALRTGLVMAALSGLCYALLY. At 137–138 the chain is on the extracellular side; that stretch reads PC. Residues 139–159 form a helical membrane-spanning segment; the sequence is LSGAFTYLVGVYVALIGFMGW. Over 160-174 the chain is Cytoplasmic; sequence RAMAGLRLAGADWRW. A helical transmembrane segment spans residues 175–195; that stretch reads TELAAGSGALFFIISDLTIAL. At 196-206 the chain is on the extracellular side; the sequence is NKFCFPVPYSR. The chain crosses the membrane as a helical span at residues 207–227; the sequence is ALIMSTYYVAQMLVALSAVES. At 228–240 the chain is on the cytoplasmic side; sequence REPVEHYRLTKAN.

The protein belongs to the TMEM86 family. Expressed in the macrophages.

It localises to the endoplasmic reticulum membrane. It catalyses the reaction a 1-O-(1Z-alkenyl)-sn-glycero-3-phosphocholine + H2O = a 2,3-saturated aldehyde + sn-glycerol 3-phosphocholine. The catalysed reaction is a 1-O-(1Z-alkenyl)-sn-glycero-3-phosphoethanolamine + H2O = a 2,3-saturated aldehyde + sn-glycero-3-phosphoethanolamine. In terms of biological role, catalyzes the hydrolysis of the vinyl ether bond of choline or ethanolamine lysoplasmalogens, forming fatty aldehyde and glycerophosphocholine or glycerophosphoethanolamine, respectively and is specific for the sn-2-deacylated (lyso) form of plasmalogen. Plays an important role in lysoplasmalogen metabolism in the adipocyte tissue and macrophages. The chain is Lysoplasmalogenase TMEM86A (TMEM86A) from Homo sapiens (Human).